The primary structure comprises 81 residues: Trefoil factor 1 (81 aa).

The N-terminal stretch at methionine 1–alanine 21 is a signal peptide. Position 22 is a pyrrolidone carboxylic acid (glutamine 22). The region spanning glutamate 26–leucine 69 is the P-type domain. 3 disulfide bridges follow: cysteine 28–cysteine 54, cysteine 38–cysteine 53, and cysteine 48–cysteine 65.

The protein localises to the secreted. In terms of biological role, stabilizer of the mucous gel overlying the gastrointestinal mucosa that provides a physical barrier against various noxious agents. The chain is Trefoil factor 1 (Tff1) from Rattus norvegicus (Rat).